We begin with the raw amino-acid sequence, 2051 residues long: Autophagy-related protein 2 (2051 aa).

Residues 31–121 (QALDLDNLNF…QDEQTAKNKK (91 aa)) enclose the Chorein N-terminal domain. Positions 108–117 (SKQEQDEQTA) are enriched in basic and acidic residues. 6 disordered regions span residues 108–129 (SKQE…DGDE), 152–179 (RRLE…DDDG), 297–331 (SLVK…DMSI), 363–384 (DTQY…TPRA), 419–466 (RSEP…ADTE), and 501–564 (PGGW…DTST). Composition is skewed to polar residues over residues 374–383 (AGSSPLSTPR) and 426–435 (PPTSFQPQTM). Residues 436 to 454 (PSGAVSPAPSEPSSSASSV) show a composition bias toward low complexity.

It belongs to the ATG2 family.

It is found in the preautophagosomal structure membrane. Its subcellular location is the endoplasmic reticulum membrane. The enzyme catalyses a 1,2-diacyl-sn-glycero-3-phosphocholine(in) = a 1,2-diacyl-sn-glycero-3-phosphocholine(out). It carries out the reaction a 1,2-diacyl-sn-glycero-3-phospho-L-serine(in) = a 1,2-diacyl-sn-glycero-3-phospho-L-serine(out). The catalysed reaction is a 1,2-diacyl-sn-glycero-3-phosphoethanolamine(in) = a 1,2-diacyl-sn-glycero-3-phosphoethanolamine(out). Its function is as follows. Lipid transfer protein required for autophagosome completion and peroxisome degradation. Tethers the edge of the isolation membrane (IM) to the endoplasmic reticulum (ER) and mediates direct lipid transfer from ER to IM for IM expansion. Atg-2 binds to the ER exit site (ERES), which is the membrane source for autophagosome formation, using basic residues in its N-terminal region (NR) and to the expanding edge of the IM through its C-terminal region. The latter binding is assisted by an atg-18-PtdIns3P interaction. Atg-2 then extracts phospholipids from the membrane source using its NR and transfers them to atg-9 to the IM through its predicted beta-sheet-rich structure for membrane expansion. The protein is Autophagy-related protein 2 (apg-2) of Neurospora crassa (strain ATCC 24698 / 74-OR23-1A / CBS 708.71 / DSM 1257 / FGSC 987).